A 167-amino-acid polypeptide reads, in one-letter code: uncharacterized protein (167 aa).

Residues Asn-148 to Tyr-167 form a disordered region.

This is an uncharacterized protein from Homo sapiens (Human).